Here is a 342-residue protein sequence, read N- to C-terminus: Phomopsin biosynthesis cluster protein B' (342 aa).

The disordered stretch occupies residues 1–22; sequence MESIAKAKSLPNKGRTYDSQRP. A helical transmembrane segment spans residues 87 to 107; the sequence is VLIIGCAVISLFAIIGALGFA. Residues 118–186 form a disordered region; the sequence is CASPAHQNPH…QCGESPDEAQ (69 aa). Low complexity predominate over residues 144-155; it reads HSGSHSSSSSTN. A glycan (N-linked (GlcNAc...) asparagine) is linked at Asn248.

Its subcellular location is the membrane. Its function is as follows. Part of the gene cluster that mediates the biosynthesis of the phomopsins, a group of hexapeptide mycotoxins which infects lupins and causes lupinosis disease in livestock. The role of phomB' within the phomopsins biosynthesis pathway has still to be determined. The pathway starts with the processing of the precursor phomA by several endopeptidases including kexin proteases as well as the cluster-specific S41 family peptidase phomP1 and the oligopeptidase phomG to produce 10 identical copies of the hexapeptide Tyr-Val-Ile-Pro-Ile-Asp. After being excised from the precursor peptide, the core peptides are cyclized and modified post-translationally by enzymes encoded within the gene cluster. The timing and order of proteolysis of the phomA precursor and PTMs are still unknown. Two tyrosinase-like enzymes, phomQ1 and phomQ2, catalyze the chlorination and hydroxylation of Tyr, respectively. PhomYb, is proposed to be involved in the construction of the macrocyclic structure. The other 4 ustYa family proteins may be involved in PTMs that generate the unique structure of phomopsin A. PhomYa is required for the hydroxylation of C-beta of Tyr. PhomYc, phomYd, and phomYe are responsible for the biosynthesis of 2,3-dehydroisoleucine (dIle), 2,3-dehydroaspartic acid (dAsp), and 3,4-dehydroproline (dPro), respectively. While dIle formation by phomYc is indispensable for the installation of dAsp by phomYd, the order of the other PTMs have not been elucidated yet. Most of the biosynthetic enzymes likely have broad substrate specificity, and thus, there might be a metabolic grid from a precursor to phomopsin A. The enzyme(s) responsible for the biosynthesis of 3,4-dehydrovaline (dVal) have also not been identified yet. Finally, phomM acts as an S-adenosylmethionine-dependent alpha-N-methyltransferase that catalyzes two successive N-methylation reactions, converting N-desmethyl-phomopsin A to phomopsin A and phomopsin A further to an N,N-dimethylated congener called phomopsin E. The sequence is that of Phomopsin biosynthesis cluster protein B' from Diaporthe leptostromiformis (Lupinosis disease fungus).